A 417-amino-acid chain; its full sequence is Gamma-glutamyl phosphate reductase (417 aa).

This sequence belongs to the gamma-glutamyl phosphate reductase family.

The protein resides in the cytoplasm. It catalyses the reaction L-glutamate 5-semialdehyde + phosphate + NADP(+) = L-glutamyl 5-phosphate + NADPH + H(+). The protein operates within amino-acid biosynthesis; L-proline biosynthesis; L-glutamate 5-semialdehyde from L-glutamate: step 2/2. In terms of biological role, catalyzes the NADPH-dependent reduction of L-glutamate 5-phosphate into L-glutamate 5-semialdehyde and phosphate. The product spontaneously undergoes cyclization to form 1-pyrroline-5-carboxylate. In Escherichia coli (strain SMS-3-5 / SECEC), this protein is Gamma-glutamyl phosphate reductase.